The chain runs to 236 residues: Phosphoribosylaminoimidazole-succinocarboxamide synthase (236 aa).

Belongs to the SAICAR synthetase family.

The enzyme catalyses 5-amino-1-(5-phospho-D-ribosyl)imidazole-4-carboxylate + L-aspartate + ATP = (2S)-2-[5-amino-1-(5-phospho-beta-D-ribosyl)imidazole-4-carboxamido]succinate + ADP + phosphate + 2 H(+). The protein operates within purine metabolism; IMP biosynthesis via de novo pathway; 5-amino-1-(5-phospho-D-ribosyl)imidazole-4-carboxamide from 5-amino-1-(5-phospho-D-ribosyl)imidazole-4-carboxylate: step 1/2. This is Phosphoribosylaminoimidazole-succinocarboxamide synthase from Campylobacter concisus (strain 13826).